We begin with the raw amino-acid sequence, 309 residues long: 4-diphosphocytidyl-2-C-methyl-D-erythritol kinase (309 aa).

Residue K11 is part of the active site. P94–A104 contacts ATP. D136 is a catalytic residue.

The protein belongs to the GHMP kinase family. IspE subfamily.

The catalysed reaction is 4-CDP-2-C-methyl-D-erythritol + ATP = 4-CDP-2-C-methyl-D-erythritol 2-phosphate + ADP + H(+). It participates in isoprenoid biosynthesis; isopentenyl diphosphate biosynthesis via DXP pathway; isopentenyl diphosphate from 1-deoxy-D-xylulose 5-phosphate: step 3/6. Functionally, catalyzes the phosphorylation of the position 2 hydroxy group of 4-diphosphocytidyl-2C-methyl-D-erythritol. The sequence is that of 4-diphosphocytidyl-2-C-methyl-D-erythritol kinase from Synechococcus sp. (strain JA-3-3Ab) (Cyanobacteria bacterium Yellowstone A-Prime).